The following is a 145-amino-acid chain: Leghemoglobin (145 aa).

One can recognise a Globin domain in the interval 3 to 145; the sequence is GFTEKQEALV…ELAAALKKAF (143 aa). Tyr-26 and Tyr-31 each carry nitrated tyrosine. His-62 provides a ligand contact to O2. Heme b contacts are provided by Lys-65, His-93, and Lys-96. The residue at position 134 (Tyr-134) is a Nitrated tyrosine.

The protein belongs to the plant globin family. In terms of assembly, monomer. Nitrated in effective nodules and particularly in hypoxic conditions; this mechanism may play a protective role in the symbiosis by buffering toxic peroxynitrite NO(2)(-). Nitration level decrease during nodule senescence. In terms of tissue distribution, root nodules.

Its subcellular location is the cytoplasm. It localises to the cytosol. It is found in the nucleus. Leghemoglobin that reversibly binds oxygen O(2) through a pentacoordinated heme iron. In root nodules, facilitates the diffusion of oxygen to the bacteroids while preventing the bacterial nitrogenase from being inactivated by buffering dioxygen, nitric oxide and carbon monoxide, and promoting the formation of reactive oxygen species (ROS, e.g. H(2)O(2)). This role is essential for symbiotic nitrogen fixation (SNF). The protein is Leghemoglobin of Psophocarpus tetragonolobus (Winged bean).